The primary structure comprises 290 residues: Probable ATP-dependent kinase TDA10 (290 aa).

Residue 38–45 (GPQGSGKS) coordinates ATP.

Belongs to the GLYK kinase family.

It is found in the cytoplasm. Its subcellular location is the nucleus. Functionally, ATP-dependent kinase whose specificity is not yet known. The polypeptide is Probable ATP-dependent kinase TDA10 (TDA10) (Saccharomyces cerevisiae (strain ATCC 204508 / S288c) (Baker's yeast)).